Here is a 219-residue protein sequence, read N- to C-terminus: Large ribosomal subunit protein uL3 (219 aa).

Glutamine 151 is modified (N5-methylglutamine).

Belongs to the universal ribosomal protein uL3 family. Part of the 50S ribosomal subunit. Forms a cluster with proteins L14 and L19. Methylated by PrmB.

Its function is as follows. One of the primary rRNA binding proteins, it binds directly near the 3'-end of the 23S rRNA, where it nucleates assembly of the 50S subunit. This is Large ribosomal subunit protein uL3 from Blochmanniella floridana.